We begin with the raw amino-acid sequence, 124 residues long: Urease subunit beta (124 aa).

The protein belongs to the urease beta subunit family. Heterotrimer of UreA (gamma), UreB (beta) and UreC (alpha) subunits. Three heterotrimers associate to form the active enzyme.

Its subcellular location is the cytoplasm. The enzyme catalyses urea + 2 H2O + H(+) = hydrogencarbonate + 2 NH4(+). It participates in nitrogen metabolism; urea degradation; CO(2) and NH(3) from urea (urease route): step 1/1. In Bacillus subtilis (strain 168), this protein is Urease subunit beta.